The primary structure comprises 522 residues: F-box only protein 7 (522 aa).

A ubiquitin-like region spans residues 1–87 (MKLRVRLQKR…EDAIAAPNLP (87 aa)). The span at 88–132 (SSTVSEHSSVQNNDQPSLATSSSQSNIQDAQLHDSLQGQATQSEV) shows a compositional bias: polar residues. The disordered stretch occupies residues 88 to 151 (SSTVSEHSSV…GQHFEAEAVP (64 aa)). Residues 91–128 (VSEHSSVQNNDQPSLATSSSQSNIQDAQLHDSLQGQAT) form an important for interaction with PINK1 region. Positions 128–168 (TQSEVWNDDSVSGPGQHFEAEAVPDVVDVEEGTGYYLAEPM) are important for interaction with CDK6. An important for dimerization and interaction with PSMF1 region spans residues 179 to 323 (PHSLEILYQS…PLLAFTRQAL (145 aa)). In terms of domain architecture, F-box spans 328–374 (VFGLVVLPLELKLRIFRLLDVRSVLSLSAVCRDLCITSNDQLLWRCL). The interval 380 to 522 (RDGSIRGRDT…WPTDSRLPFM (143 aa)) is important for interaction with CDK6. Omega-N-methylarginine is present on residues Arg-431 and Arg-451. An RFDP motif motif is present at residues 481–484 (RFDP). Residues 484 to 522 (PVGPLPGPNPILPGRGGPSDRFPLRPSRGWPTDSRLPFM) are disordered. An Asymmetric dimethylarginine modification is found at Arg-518.

In terms of assembly, part of the SCF (SKP1-CUL1-F-box) E3 ubiquitin-protein ligase complex SCF(FBXO7) formed of CUL1, SKP1, RBX1 and FBXO7. Interacts via its C-terminal proline-rich region with DLGAP5. Interacts with BIRC2. Interacts with CDK6 and promotes its interaction with D-type cyclin. Interacts (via the N-terminal Ubl domain) with PRKN. Interacts (via N-terminal region) with PINK1. Interacts with PSMF1.

It localises to the cytoplasm. The protein localises to the nucleus. Its subcellular location is the mitochondrion. The protein resides in the cytosol. It functions in the pathway protein modification; protein ubiquitination. In terms of biological role, substrate recognition component of a SCF (SKP1-CUL1-F-box protein) E3 ubiquitin-protein ligase complex which mediates the ubiquitination and subsequent proteasomal degradation of target proteins and plays a role in several biological processes such as cell cycle, cell proliferation, or maintenance of chromosome stability. Recognizes and ubiquitinates BIRC2 and the cell cycle regulator DLGAP5. Plays a role downstream of PINK1 in the clearance of damaged mitochondria via selective autophagy (mitophagy) by targeting PRKN to dysfunctional depolarized mitochondria. Promotes MFN1 ubiquitination. Mediates the ubiquitination and proteasomal degradation of UXT isoform 2, thereby impairing the NF-kappa-B signaling pathway. Inhibits NF-kappa-B pathway also by promoting the ubiquitinatioin of TRAF2. Affects the assembly state and activity of the proteasome in the cells including neurons by ubiquitinating the proteasomal subunit PSMA2 via 'Lys-63'-linked polyubiquitin chains. Promotes 'Lys-48'-linked polyubiquitination SIRT7, leading to the hydrogen peroxide-induced cell death. The protein is F-box only protein 7 (FBXO7) of Bos taurus (Bovine).